The sequence spans 486 residues: MWKSVVGHDVSVSVETQGDDWDTDPDFVNDISEKEQRWGAKTIEGSGRTEHINIHQLRNKVSEEHDILKKKELESGPKASHGYGGRFGVERDRMDKSAVGHEYVADVEKHSSQTDAARGFGGKYGVERDRADKSAVGFDYKGEVEKHASQKDYSHGFGGRYGVEKDKRDKAALGYDYKGETEKHESQRDYAKGFGGQYGIQKDRVDKSAVGFNEMEAPTTAYKKTTPIEAASSGARGLKAKFESLAEEKRKREEEEKAQQMARQQQERKAVVKMSREVQQPSMPVEEPAAPAQLPKKISSEVWPPAESHLPPESQPVRSRREYPVPSLPTRQSPLQNHLEDNEEPPALPPRTPEGLQVVEEPVYEAAPELEPEPEPDYEPEPETEPDYEDVGELDRQDEDAEGDYEDVLEPEDTPSLSYQAGPSAGAGGAGISAIALYDYQGEGSDELSFDPDDIITDIEMVDEGWWRGQCRGHFGLFPANYVKLL.

The interval 27-66 (FVNDISEKEQRWGAKTIEGSGRTEHINIHQLRNKVSEEHD) is involved in HAX-1 binding. Lys41 bears the N6-acetyllysine mark. Cortactin repeat units follow at residues 79–115 (ASHG…SQTD), 116–152 (AARG…SQKD), and 153–189 (YSHG…SQRD). At Lys123 the chain carries N6-acetyllysine. Residue Tyr140 is modified to Phosphotyrosine. Residues 190-212 (YAKGFGGQYGIQKDRVDKSAVGF) form a Cortactin 4; truncated repeat. Lys192 is subject to N6-acetyllysine. Tyr198 bears the Phosphotyrosine mark. Tyr222 is subject to Phosphotyrosine; by FGR. Residues 226–430 (TPIEAASSGA…AGPSAGAGGA (205 aa)) are disordered. Basic and acidic residues-rich tracts occupy residues 240 to 258 (AKFE…EEKA) and 265 to 276 (QQERKAVVKMSR). An N6-acetyllysine modification is found at Lys241. A Phosphoserine modification is found at Ser275. The residue at position 330 (Thr330) is a Phosphothreonine. Residue Ser333 is modified to Phosphoserine. Low complexity predominate over residues 358-367 (VVEEPVYEAA). Residues 368–413 (PELEPEPEPDYEPEPETEPDYEDVGELDRQDEDAEGDYEDVLEPED) are compositionally biased toward acidic residues. Phosphotyrosine; by SYK and FES occurs at positions 388 and 405. In terms of domain architecture, SH3 spans 429–486 (GAGISAIALYDYQGEGSDELSFDPDDIITDIEMVDEGWWRGQCRGHFGLFPANYVKLL).

Interacts (via SH2 domain) with FGR. Associates with the SH2 and SH3 domains of LCK. Binding to he LCK SH3 domain occurs constitutively, while binding to the LCK SH2 domain occurs only upon TCR stimulation. A similar binding pattern was observed with LYN, but not with FYN in which the FYN SH2 region associates upon TCR stimulation but the FYN SH3 region does not associate regardless of TCR stimulation. Directly associates with HAX1, through binding to its C-terminal region. Interacts with HS1BP3. Interacts with FES/FPS. Forms a multiprotein complex with LYN and ANKRD54. Post-translationally, phosphorylated by LYN, FYN and FGR after cross-linking of surface IgM on B-cells. Phosphorylation by LYN, FYN and FGR requires prior phosphorylation by SYK. Binds to LCK in vivo, and is tyrosine phosphorylated upon TCR stimulation. Phosphorylated by FES. In terms of tissue distribution, expressed only in tissues and cells of hematopoietic origin.

The protein localises to the mitochondrion. In terms of biological role, substrate of the antigen receptor-coupled tyrosine kinase. Plays a role in antigen receptor signaling for both clonal expansion and deletion in lymphoid cells. May also be involved in the regulation of gene expression. The polypeptide is Hematopoietic lineage cell-specific protein (Hcls1) (Mus musculus (Mouse)).